The sequence spans 196 residues: uncharacterized protein (196 aa).

The N-terminal stretch at 1 to 23 (MSARAPKELRLALPPCLLNRTFA) is a signal peptide. Asparagine 19 and asparagine 26 each carry an N-linked (GlcNAc...) asparagine glycan. Residues 24-60 (SHNASGGSNAGIRSSGAGGGTCITQVGQQLFQSFSST) lie on the Extracellular side of the membrane. A helical transmembrane segment spans residues 61–81 (LVLIVLVTLIFCLIVLSLSTF). The Cytoplasmic segment spans residues 82–196 (HIHKRRMKKR…EGLLQTVVLS (115 aa)). The segment at 93-184 (MQRAQEEYER…AHAASSCLDT (92 aa)) is disordered. Basic and acidic residues-rich tracts occupy residues 95-106 (RAQEEYERDHCS) and 124-135 (HGKETRLERQPR). Residues 161 to 171 (CAPPPPPPVPS) are compositionally biased toward pro residues. Low complexity predominate over residues 172–181 (PHGAHAASSC).

Its subcellular location is the membrane. This is an uncharacterized protein from Rattus norvegicus (Rat).